Reading from the N-terminus, the 72-residue chain is ATP synthase subunit c (72 aa).

2 helical membrane-spanning segments follow: residues 1-21 (MSLG…GAGI) and 48-68 (MFIG…FSFI).

It belongs to the ATPase C chain family. In terms of assembly, F-type ATPases have 2 components, F(1) - the catalytic core - and F(0) - the membrane proton channel. F(1) has five subunits: alpha(3), beta(3), gamma(1), delta(1), epsilon(1). F(0) has three main subunits: a(1), b(2) and c(10-14). The alpha and beta chains form an alternating ring which encloses part of the gamma chain. F(1) is attached to F(0) by a central stalk formed by the gamma and epsilon chains, while a peripheral stalk is formed by the delta and b chains.

The protein localises to the cell membrane. F(1)F(0) ATP synthase produces ATP from ADP in the presence of a proton or sodium gradient. F-type ATPases consist of two structural domains, F(1) containing the extramembraneous catalytic core and F(0) containing the membrane proton channel, linked together by a central stalk and a peripheral stalk. During catalysis, ATP synthesis in the catalytic domain of F(1) is coupled via a rotary mechanism of the central stalk subunits to proton translocation. Its function is as follows. Key component of the F(0) channel; it plays a direct role in translocation across the membrane. A homomeric c-ring of between 10-14 subunits forms the central stalk rotor element with the F(1) delta and epsilon subunits. The protein is ATP synthase subunit c of Bacillus caldotenax.